Reading from the N-terminus, the 330-residue chain is DNA-directed RNA polymerase subunit alpha (330 aa).

The tract at residues 1–237 is alpha N-terminal domain (alpha-NTD); it reads MYTEINEMLT…RQLHAFVDMK (237 aa). The interval 251 to 330 is alpha C-terminal domain (alpha-CTD); that stretch reads FDPVLLRSVD…ENWPPASLGE (80 aa).

This sequence belongs to the RNA polymerase alpha chain family. As to quaternary structure, homodimer. The RNAP catalytic core consists of 2 alpha, 1 beta, 1 beta' and 1 omega subunit. When a sigma factor is associated with the core the holoenzyme is formed, which can initiate transcription.

It carries out the reaction RNA(n) + a ribonucleoside 5'-triphosphate = RNA(n+1) + diphosphate. Functionally, DNA-dependent RNA polymerase catalyzes the transcription of DNA into RNA using the four ribonucleoside triphosphates as substrates. The protein is DNA-directed RNA polymerase subunit alpha of Legionella pneumophila (strain Paris).